A 529-amino-acid polypeptide reads, in one-letter code: Chaperonin GroEL, chloroplastic (529 aa).

Residues 29-32 (TLGP), 86-90 (DGTTT), Gly414, 480-482 (DAA), and Asp496 each bind ATP.

Belongs to the chaperonin (HSP60) family. In terms of assembly, forms a cylinder of 14 subunits composed of two heptameric rings stacked back-to-back. Interacts with the co-chaperonin GroES.

Its subcellular location is the plastid. The protein localises to the chloroplast. It carries out the reaction ATP + H2O + a folded polypeptide = ADP + phosphate + an unfolded polypeptide.. Together with its co-chaperonin GroES, plays an essential role in assisting protein folding. The GroEL-GroES system forms a nano-cage that allows encapsulation of the non-native substrate proteins and provides a physical environment optimized to promote and accelerate protein folding. This chain is Chaperonin GroEL, chloroplastic, found in Guillardia theta (Cryptophyte).